A 309-amino-acid polypeptide reads, in one-letter code: Sulfate adenylyltransferase subunit 2 (309 aa).

Belongs to the PAPS reductase family. CysD subfamily. As to quaternary structure, heterodimer composed of CysD, the smaller subunit, and CysN.

It catalyses the reaction sulfate + ATP + H(+) = adenosine 5'-phosphosulfate + diphosphate. Its pathway is sulfur metabolism; hydrogen sulfide biosynthesis; sulfite from sulfate: step 1/3. In terms of biological role, with CysN forms the ATP sulfurylase (ATPS) that catalyzes the adenylation of sulfate producing adenosine 5'-phosphosulfate (APS) and diphosphate, the first enzymatic step in sulfur assimilation pathway. APS synthesis involves the formation of a high-energy phosphoric-sulfuric acid anhydride bond driven by GTP hydrolysis by CysN coupled to ATP hydrolysis by CysD. The chain is Sulfate adenylyltransferase subunit 2 from Aeromonas salmonicida (strain A449).